Reading from the N-terminus, the 794-residue chain is Zinc finger protein 148 (794 aa).

Residue lysine 6 forms a Glycyl lysine isopeptide (Lys-Gly) (interchain with G-Cter in SUMO2) linkage. A Phosphoserine modification is found at serine 51. Glycyl lysine isopeptide (Lys-Gly) (interchain with G-Cter in SUMO2) cross-links involve residues lysine 88, lysine 115, and lysine 132. The C2H2-type 1 zinc-finger motif lies at 171–193 (HVCEHCNAAFRTNYHLQRHVFIH). Phosphothreonine is present on threonine 194. 2 C2H2-type zinc fingers span residues 199-221 (FQCS…EKIH) and 227-249 (FRCD…KRTH). Serine 250 is subject to Phosphoserine. Residues 255-278 (YQCEYCLQYFSRTDRVLKHKRMCH) form a C2H2-type 4 zinc finger. Lysine 291 participates in a covalent cross-link: Glycyl lysine isopeptide (Lys-Gly) (interchain with G-Cter in SUMO2). A disordered region spans residues 298-336 (EEDSGFSTSPKDNSLPKKKRQKTEKKSSGMDKESALDKS). Phosphoserine is present on residues serine 301 and serine 306. Lysine 308 is covalently cross-linked (Glycyl lysine isopeptide (Lys-Gly) (interchain with G-Cter in SUMO2)). Residues 321–336 (EKKSSGMDKESALDKS) are compositionally biased toward basic and acidic residues. Residue lysine 356 forms a Glycyl lysine isopeptide (Lys-Gly) (interchain with G-Cter in SUMO1); alternate linkage. Lysine 356 is covalently cross-linked (Glycyl lysine isopeptide (Lys-Gly) (interchain with G-Cter in SUMO2); alternate). Lysine 402 participates in a covalent cross-link: Glycyl lysine isopeptide (Lys-Gly) (interchain with G-Cter in SUMO2). Serine 412 carries the phosphoserine modification. Glycyl lysine isopeptide (Lys-Gly) (interchain with G-Cter in SUMO2) cross-links involve residues lysine 421 and lysine 424. The span at 574-588 (NSSEVPEVTPSENVG) shows a compositional bias: polar residues. The segment at 574–599 (NSSEVPEVTPSENVGSSSQASSSDKA) is disordered. Residue lysine 607 is modified to N6-acetyllysine. 2 positions are modified to phosphoserine: serine 665 and serine 784.

The protein belongs to the krueppel C2H2-type zinc-finger protein family. In terms of assembly, interacts with HNRNPDL. Interacts with the 5FMC complex; the interaction requires association with CHTOP. Interacts with CAVIN1. Post-translationally, sumoylated with SUMO2. Desumoylated by SENP3, resulting in the stimulation of transcription of its target genes.

The protein localises to the nucleus. Involved in transcriptional regulation. Represses the transcription of a number of genes including gastrin, stromelysin and enolase. Binds to the G-rich box in the enhancer region of these genes. This Pongo abelii (Sumatran orangutan) protein is Zinc finger protein 148 (ZNF148).